A 164-amino-acid chain; its full sequence is Phosphopantetheine adenylyltransferase (164 aa).

Threonine 10 serves as a coordination point for substrate. Residues 10-11 (TF) and histidine 18 each bind ATP. Lysine 42, threonine 79, and arginine 93 together coordinate substrate. ATP contacts are provided by residues 94–96 (GLR), glutamate 104, and 129–135 (NQIISSR).

Belongs to the bacterial CoaD family. Homohexamer. The cofactor is Mg(2+).

The protein resides in the cytoplasm. The enzyme catalyses (R)-4'-phosphopantetheine + ATP + H(+) = 3'-dephospho-CoA + diphosphate. The protein operates within cofactor biosynthesis; coenzyme A biosynthesis; CoA from (R)-pantothenate: step 4/5. Functionally, reversibly transfers an adenylyl group from ATP to 4'-phosphopantetheine, yielding dephospho-CoA (dPCoA) and pyrophosphate. This is Phosphopantetheine adenylyltransferase from Pelagibacter ubique (strain HTCC1062).